A 1647-amino-acid polypeptide reads, in one-letter code: Nucleoporin nup186 (1647 aa).

The protein belongs to the NUP186/NUP192/NUP205 family.

It is found in the cytoplasm. Its subcellular location is the nucleus. Its function is as follows. Functions as a component of the nuclear pore complex (NPC). NPC components, collectively referred to as nucleoporins (NUPs), can play the role of both NPC structural components and of docking or interaction partners for transiently associated nuclear transport factors. Active directional transport is assured by both, a Phe-Gly (FG) repeat affinity gradient for these transport factors across the NPC and a transport cofactor concentration gradient across the nuclear envelope. In Schizosaccharomyces pombe (strain 972 / ATCC 24843) (Fission yeast), this protein is Nucleoporin nup186 (nup186).